The following is a 518-amino-acid chain: Arrestin-related trafficking adapter 10 (518 aa).

Residue K118 forms a Glycyl lysine isopeptide (Lys-Gly) (interchain with G-Cter in ubiquitin) linkage.

The protein belongs to the ART10 family. In terms of assembly, interacts with RSP5. Post-translationally, ubiquitinated by RSP5.

The protein resides in the cytoplasm. Its function is as follows. May regulate endocytosis by recruiting RSP5 ubiquitin ligase activity to specific plasma membrane proteins in response to extracellular stimuli. The sequence is that of Arrestin-related trafficking adapter 10 (ART10) from Saccharomyces cerevisiae (strain RM11-1a) (Baker's yeast).